The following is a 683-amino-acid chain: U4/U6 small nuclear ribonucleoprotein Prp3 (683 aa).

The 87-residue stretch at 1–87 (MALSKRELDE…HSKSSSDRSR (87 aa)) folds into the PWI domain. A compositionally biased stretch (basic and acidic residues) spans 73–107 (GRSSRHSKSSSDRSRKRELKEVFGDDSEISKESSG). Positions 73–135 (GRSSRHSKSS…IPGPPSESPG (63 aa)) are disordered. Residue Lys-139 forms a Glycyl lysine isopeptide (Lys-Gly) (interchain with G-Cter in SUMO2) linkage. Residues 153 to 183 (IEERKKQLSFISPPTPQPKTPSSSQPERLPI) form a disordered region. At Ser-164 the chain carries Phosphoserine. Thr-167 is modified (phosphothreonine). Residues Lys-244 and Lys-252 each participate in a glycyl lysine isopeptide (Lys-Gly) (interchain with G-Cter in SUMO2) cross-link. Positions 416–550 (NLVEHPAQLN…VHISVYRVRN (135 aa)) are mediates interaction with SART3. Phosphoserine is present on Ser-619.

In terms of assembly, component of the precatalytic spliceosome (spliceosome B complex). Component of the U4/U6-U5 tri-snRNP complex, a building block of the precatalytic spliceosome (spliceosome B complex). The U4/U6-U5 tri-snRNP complex is composed of the U4, U6 and U5 snRNAs and at least PRPF3, PRPF4, PRPF6, PRPF8, PRPF31, SNRNP200, TXNL4A, SNRNP40, SNRPB, SNRPD1, SNRPD2, SNRPD3, SNRPE, SNRPF, SNRPG, DDX23, CD2BP2, PPIH, SNU13, EFTUD2, SART1 and USP39, plus LSM2, LSM3, LSM4, LSM5, LSM6, LSM7 and LSM8. Interacts directly with PRPF4. Part of a heteromeric complex containing PPIH, PRPF3 and PRPF4 that is stable in the absence of RNA. Interacts with SART3; the interaction is direct and recruits the deubiquitinase USP4 to PRPF3. Interacts with PRPF19. Interacts ('Lys-63'-linked polyubiquitinated) with PRPF8 (via the MPN (JAB/Mov34) domain); may stabilize the U4/U6-U5 tri-snRNP complex. Interacts with ERCC6. Post-translationally, ubiquitinated. Undergoes 'Lys-63'-linked polyubiquitination by PRPF19 and deubiquitination by USP4. 'Lys-63'-linked ubiquitination increases the affinity for PRPF8 and may regulate the assembly of the U4/U6-U5 tri-snRNP complex.

The protein resides in the nucleus. The protein localises to the nucleus speckle. Its function is as follows. Plays a role in pre-mRNA splicing as component of the U4/U6-U5 tri-snRNP complex that is involved in spliceosome assembly, and as component of the precatalytic spliceosome (spliceosome B complex). This is U4/U6 small nuclear ribonucleoprotein Prp3 (PRPF3) from Pongo abelii (Sumatran orangutan).